The following is a 524-amino-acid chain: Na(+)/H(+) antiporter NhaB (524 aa).

Helical transmembrane passes span 13–33 (FLGN…IINP), 98–118 (LLLV…LFVF), 140–160 (AFLS…SVSV), 239–259 (FFIR…LVCL), 304–324 (AIIG…VGLV), 325–345 (GLSV…HSLG), 358–378 (LTVF…TPII), 448–468 (ATPN…APLI), and 479–499 (ALPY…FLLV).

It belongs to the NhaB Na(+)/H(+) (TC 2.A.34) antiporter family.

It is found in the cell inner membrane. The catalysed reaction is 2 Na(+)(in) + 3 H(+)(out) = 2 Na(+)(out) + 3 H(+)(in). Its function is as follows. Na(+)/H(+) antiporter that extrudes sodium in exchange for external protons. The chain is Na(+)/H(+) antiporter NhaB from Yersinia pestis (strain Pestoides F).